The primary structure comprises 249 residues: Salivary antigen-5 (249 aa).

A signal peptide spans 1-26 (MAKTQCPLVFSLLALALIGTLQSSAA). One can recognise an SCP domain in the interval 50–193 (SIHNYYRNLT…WYAGYLVCNY (144 aa)). N-linked (GlcNAc...) asparagine glycosylation is found at Asn-57, Asn-127, and Asn-168.

The protein belongs to the CRISP family. Venom allergen 5-like subfamily. In terms of assembly, monomeric in solution. The cofactor is Cu(2+). In terms of tissue distribution, saliva (at protein level). Salivary gland (at protein level).

Its subcellular location is the secreted. Functionally, antioxidant protein that scavenges superoxide radicals. Removes superoxide radicals produced by PMA-stimulated host neutrophils. Inhibits host platelet aggregation induced by low doses of collagen by interfering with the pro-aggregatory properties of reactive oxygen species on platelets. Binds to heparin and sulfated glycosaminoglycans. The polypeptide is Salivary antigen-5 (Dipetalogaster maximus (Blood-sucking bug)).